The chain runs to 581 residues: Proline--tRNA ligase (581 aa).

The protein belongs to the class-II aminoacyl-tRNA synthetase family. ProS type 1 subfamily. As to quaternary structure, homodimer.

It is found in the cytoplasm. It carries out the reaction tRNA(Pro) + L-proline + ATP = L-prolyl-tRNA(Pro) + AMP + diphosphate. Functionally, catalyzes the attachment of proline to tRNA(Pro) in a two-step reaction: proline is first activated by ATP to form Pro-AMP and then transferred to the acceptor end of tRNA(Pro). As ProRS can inadvertently accommodate and process non-cognate amino acids such as alanine and cysteine, to avoid such errors it has two additional distinct editing activities against alanine. One activity is designated as 'pretransfer' editing and involves the tRNA(Pro)-independent hydrolysis of activated Ala-AMP. The other activity is designated 'posttransfer' editing and involves deacylation of mischarged Ala-tRNA(Pro). The misacylated Cys-tRNA(Pro) is not edited by ProRS. The polypeptide is Proline--tRNA ligase (Chlamydia trachomatis serovar D (strain ATCC VR-885 / DSM 19411 / UW-3/Cx)).